The chain runs to 243 residues: Asnovolin H synthase nvfL (243 aa).

The next 7 membrane-spanning stretches (helical) occupy residues 20–42, 51–71, 75–95, 112–132, 138–160, 169–189, and 205–225; these read ANTLRIMCAISWNISYMSMAYYS, ALIPLCNNIAWEFVYSFIHCP, FVRIENTGWFLLNIVVMYAAI, LPFIFAVGISAMIAGHLALAA, IAFVWSAKGCQLVLSTGALSQLL, SYVVWLSRYLGTVFIDVMVTI, and LLLWFMAVFHLLDWTYGFCFY.

This sequence belongs to the paxB family.

Its subcellular location is the membrane. It carries out the reaction (3R)-[(10S)-11-epoxyfarnesyl]-2,3,5-trimethyl-6-oxido-4-oxocyclohexa-1,5-diene-1-carboxylate + H(+) = asnovolin H. Its pathway is secondary metabolite biosynthesis; terpenoid biosynthesis. Functionally, terpene cyclase; part of the gene cluster that mediates the biosynthesis of novofumigatonin, a heavily oxygenated meroterpenoid containing a unique orthoester moiety. The first step of the pathway is the synthesis of 3,5-dimethylorsellinic acid (DMOA) by the polyketide synthase nvfA via condensation of one acetyl-CoA starter unit with 3 malonyl-CoA units and 2 methylations. DMOA is then converted to farnesyl-DMOA by the farnesyltransferase nvfB. Epoxydation by FAD-dependent monooxygenase nvfK, followed by a protonation-initiated cyclization catalyzed by the terpene cyclase nvfL leads to the production of asnavolin H. The short chain dehydrogenase nvfC then as a 3-OH dehydrogenase of asnovolin H to yield chemesin D. There are two branches to synthesize asnovolin A from chemesin D. In one branch, chemesin D undergoes Baeyer-Villiger oxidation by nvfH, methylation by nvfJ, and enoyl reduction by the nvfM D enoylreductase that reduces the double bond between C-5'and C-6', to form respectively asnovolin I, asnovolin K, and asnovolin A. In the other branch, the methylation precedes the Baeyer-Villiger oxidation and the enoyl reduction to yield asnovolin A via the asnovolin J intermediate. Asnovolin A is further converted to fumigatonoid A by the Fe(II)/2-oxoglutarate-dependent dioxygenase nvfI that catalyzes an endoperoxidation reaction. The alpha/beta hydrolase nvfD then acts as an epimerase that converts fumigatonoid A to its C-5' epimer, which then undergoes spontaneous or nvfD-catalyzed lactonization. The following step utilizes the ketoreductase nvfG to produce fumigatonoid B. The dioxygenase nvfE further converts fumigatonoid B into fumigatonoid C. Finally the Fe(II)/2-oxoglutarate-dependent dioxygenase nvfF catalyzes two rounds of oxidation to transform fumigatonoid C into the end product, novofumigatonin A. The chain is Asnovolin H synthase nvfL from Aspergillus novofumigatus (strain IBT 16806).